A 1060-amino-acid chain; its full sequence is Probable serine/threonine-protein kinase MARK-A (1060 aa).

Basic and acidic residues-rich tracts occupy residues 1-11 and 23-37; these read METLKEEEQFR and HLKEETQIQQKEREQ. Disordered regions lie at residues 1 to 52 and 67 to 88; these read METL…LQLQ and NKIPSSNNSSNSSSPNPLSISV. 2 stretches are compositionally biased toward low complexity: residues 38–52 and 68–88; these read QQQQQQQLQQQLQLQ and KIPSSNNSSNSSSPNPLSISV. Residues 109 to 361 enclose the Protein kinase domain; it reads YLVIKTIGRG…MEEIINHPWL (253 aa). ATP contacts are provided by residues 115–123 and Lys139; that span reads IGRGQFGKV. Asp232 acts as the Proton acceptor in catalysis. Positions 409-475 are enriched in low complexity; the sequence is INNINNTMAT…TTTTNATTTT (67 aa). 4 disordered regions span residues 409–488, 560–701, 714–886, and 899–966; these read INNI…NNEE, GENS…SPLC, LREK…PVHS, and DDKS…QEPR. Residues 488-528 enclose the UBA domain; it reads ELDQEIIEELVGLGFEREELCNSIRQNKYNDAASTYFLLQG. Over residues 577–594 the composition is skewed to polar residues; the sequence is TVDSPKSTNTPQYRSSNT. Composition is skewed to low complexity over residues 603–613, 620–637, 650–699, and 720–760; these read QQQQQQQQQQQ, QQQNQQQSQQQYNNNNHN, STTV…NPSP, and TTTN…TSPN. Positions 761 to 770 are enriched in polar residues; it reads LQPFSLASTA. Composition is skewed to low complexity over residues 771–799 and 811–831; these read NNNNNNNNSNNNSNNNNNNNNNNNNSLNS and QQQQQMQQASNTRRLRSNSSS. Residues 837-846 show a composition bias toward basic and acidic residues; it reads QRQESRKLED. 2 stretches are compositionally biased toward low complexity: residues 904-926 and 935-965; these read NSSSSNNNTNNNNTTTSVSTNNT and QNSNNNNQQATSSSPNVTSPSSPSQQQQQEP. The region spanning 1008–1057 is the KA1 domain; it reads IECETEGVRFSIEICRLPRLSVNGLKFKRIGGSSWRYKSICKDLLSQMKL.

Belongs to the protein kinase superfamily. CAMK Ser/Thr protein kinase family. SNF1 subfamily.

It catalyses the reaction L-seryl-[protein] + ATP = O-phospho-L-seryl-[protein] + ADP + H(+). It carries out the reaction L-threonyl-[protein] + ATP = O-phospho-L-threonyl-[protein] + ADP + H(+). The polypeptide is Probable serine/threonine-protein kinase MARK-A (mrkA) (Dictyostelium discoideum (Social amoeba)).